Here is a 331-residue protein sequence, read N- to C-terminus: Glycerol-3-phosphate dehydrogenase [NAD(P)+] (331 aa).

Residues Trp-14, Arg-34, and Lys-107 each contribute to the NADPH site. Residues Lys-107, Gly-135, and Ser-137 each contribute to the sn-glycerol 3-phosphate site. Residue Ala-139 participates in NADPH binding. Lys-190, Asp-243, Ser-253, Arg-254, and Asn-255 together coordinate sn-glycerol 3-phosphate. The active-site Proton acceptor is the Lys-190. Arg-254 provides a ligand contact to NADPH. Positions 278 and 280 each coordinate NADPH.

Belongs to the NAD-dependent glycerol-3-phosphate dehydrogenase family.

The protein localises to the cytoplasm. It catalyses the reaction sn-glycerol 3-phosphate + NAD(+) = dihydroxyacetone phosphate + NADH + H(+). It carries out the reaction sn-glycerol 3-phosphate + NADP(+) = dihydroxyacetone phosphate + NADPH + H(+). Its pathway is membrane lipid metabolism; glycerophospholipid metabolism. Catalyzes the reduction of the glycolytic intermediate dihydroxyacetone phosphate (DHAP) to sn-glycerol 3-phosphate (G3P), the key precursor for phospholipid synthesis. The protein is Glycerol-3-phosphate dehydrogenase [NAD(P)+] of Caulobacter vibrioides (strain ATCC 19089 / CIP 103742 / CB 15) (Caulobacter crescentus).